The following is a 615-amino-acid chain: Deoxyribodipyrimidine photo-lyase (615 aa).

The disordered stretch occupies residues Met-1–Lys-53. A compositionally biased stretch (polar residues) spans Pro-11 to Pro-21. A compositionally biased stretch (low complexity) spans Thr-31 to Thr-40. Residues Gln-108–Val-249 form the Photolyase/cryptochrome alpha/beta domain. Tyr-352 contacts FAD. Residue Arg-356 coordinates DNA. Thr-364–Ser-368 contributes to the FAD binding site. Interaction with DNA stretches follow at residues Glu-407–Tyr-414 and Asn-474–Arg-475. Asp-505–Asp-507 lines the FAD pocket. Gln-537 contacts DNA.

Belongs to the DNA photolyase class-1 family. In terms of assembly, monomer. It depends on FAD as a cofactor. Requires (6R)-5,10-methylene-5,6,7,8-tetrahydrofolate as cofactor.

The catalysed reaction is cyclobutadipyrimidine (in DNA) = 2 pyrimidine residues (in DNA).. Its function is as follows. Involved in repair of UV radiation-induced DNA damage. Catalyzes the light-dependent monomerization (300-600 nm) of cyclobutyl pyrimidine dimers (in cis-syn configuration), which are formed between adjacent bases on the same DNA strand upon exposure to ultraviolet radiation. This Neurospora crassa (strain ATCC 24698 / 74-OR23-1A / CBS 708.71 / DSM 1257 / FGSC 987) protein is Deoxyribodipyrimidine photo-lyase (phr).